We begin with the raw amino-acid sequence, 431 residues long: Dual-specificity RNA methyltransferase RlmN (431 aa).

Residues 1–26 are disordered; that stretch reads MATASLDTARPERRAGSDPFIEKTPE. Residues 9 to 26 show a composition bias toward basic and acidic residues; the sequence is ARPERRAGSDPFIEKTPE. Glu138 serves as the catalytic Proton acceptor. The Radical SAM core domain maps to 144-394; that stretch reads ANDRGTLCVS…VRTPRGRDIL (251 aa). Cys151 and Cys397 are joined by a disulfide. Residues Cys158, Cys162, and Cys165 each coordinate [4Fe-4S] cluster. S-adenosyl-L-methionine is bound by residues 223–224, Ser255, 277–279, and Asn354; these read GE and SLH. Catalysis depends on Cys397, which acts as the S-methylcysteine intermediate.

Belongs to the radical SAM superfamily. RlmN family. [4Fe-4S] cluster serves as cofactor.

It is found in the cytoplasm. It carries out the reaction adenosine(2503) in 23S rRNA + 2 reduced [2Fe-2S]-[ferredoxin] + 2 S-adenosyl-L-methionine = 2-methyladenosine(2503) in 23S rRNA + 5'-deoxyadenosine + L-methionine + 2 oxidized [2Fe-2S]-[ferredoxin] + S-adenosyl-L-homocysteine. The enzyme catalyses adenosine(37) in tRNA + 2 reduced [2Fe-2S]-[ferredoxin] + 2 S-adenosyl-L-methionine = 2-methyladenosine(37) in tRNA + 5'-deoxyadenosine + L-methionine + 2 oxidized [2Fe-2S]-[ferredoxin] + S-adenosyl-L-homocysteine. Its function is as follows. Specifically methylates position 2 of adenine 2503 in 23S rRNA and position 2 of adenine 37 in tRNAs. m2A2503 modification seems to play a crucial role in the proofreading step occurring at the peptidyl transferase center and thus would serve to optimize ribosomal fidelity. The polypeptide is Dual-specificity RNA methyltransferase RlmN (Methylobacterium sp. (strain 4-46)).